The chain runs to 303 residues: Quinolinate synthase (303 aa).

The iminosuccinate site is built by His-23 and Ser-40. A [4Fe-4S] cluster-binding site is contributed by Cys-85. Residues 111-113 (YIN) and Ser-128 each bind iminosuccinate. Cys-171 contacts [4Fe-4S] cluster. Residues 197 to 199 (HPE) and Thr-214 each bind iminosuccinate. Position 259 (Cys-259) interacts with [4Fe-4S] cluster.

This sequence belongs to the quinolinate synthase family. Type 2 subfamily. [4Fe-4S] cluster serves as cofactor.

The protein localises to the cytoplasm. It catalyses the reaction iminosuccinate + dihydroxyacetone phosphate = quinolinate + phosphate + 2 H2O + H(+). Its pathway is cofactor biosynthesis; NAD(+) biosynthesis; quinolinate from iminoaspartate: step 1/1. Functionally, catalyzes the condensation of iminoaspartate with dihydroxyacetone phosphate to form quinolinate. The chain is Quinolinate synthase from Clostridium acetobutylicum (strain ATCC 824 / DSM 792 / JCM 1419 / IAM 19013 / LMG 5710 / NBRC 13948 / NRRL B-527 / VKM B-1787 / 2291 / W).